A 377-amino-acid chain; its full sequence is Heat stress transcription factor B-2b (377 aa).

The disordered stretch occupies residues 1–56; the sequence is MPGEQTGETPTVAGVGGGGAGCSAGNSGGSSGCGAGGGGGGSGGGGGGGGDSQRSI. Over residues 14–51 the composition is skewed to gly residues; that stretch reads GVGGGGAGCSAGNSGGSSGCGAGGGGGGSGGGGGGGGD. A DNA-binding region spans residues 57 to 151; it reads PTPFLTKTYQ…LLRDIQRRKI (95 aa). Positions 220–265 are hydrophobic repeat HR-A/B; sequence TTSCTTAPELVEENERLRKDNERLRKEMTKLKGLYANIYTLMANFT. Residues 323-327 carry the Nuclear localization signal motif; sequence KRARR. Positions 326–377 are disordered; sequence RREEELGAAEEEDDDRREAAAQEGEQSSDVKAEPMEENNSGNHNGSWLELGK. Acidic residues predominate over residues 331 to 340; that stretch reads LGAAEEEDDD.

It belongs to the HSF family. Class B subfamily. Homotrimer. In terms of processing, exhibits temperature-dependent phosphorylation.

It is found in the nucleus. Functionally, transcriptional regulator that specifically binds DNA sequence 5'-AGAAnnTTCT-3' known as heat shock promoter elements (HSE). In Arabidopsis thaliana (Mouse-ear cress), this protein is Heat stress transcription factor B-2b (HSFB2B).